The following is a 209-amino-acid chain: Response regulator protein VraR (209 aa).

Residues 4-120 form the Response regulatory domain; the sequence is KVLFVDDHEM…DIADAVRKTY (117 aa). A 4-aspartylphosphate modification is found at Asp55. Residues 141-206 enclose the HTH luxR-type domain; sequence RAELYEMLTE…QAVIYAFQHN (66 aa). Positions 165–184 form a DNA-binding region, H-T-H motif; that stretch reads NQEIASASHITIKTVKTHVS.

In terms of processing, phosphorylated by VraS.

It is found in the cytoplasm. Member of the two-component regulatory system VraS/VraR involved in the control of the cell wall peptidoglycan biosynthesis. This chain is Response regulator protein VraR (vraR), found in Staphylococcus epidermidis (strain ATCC 35984 / DSM 28319 / BCRC 17069 / CCUG 31568 / BM 3577 / RP62A).